A 214-amino-acid polypeptide reads, in one-letter code: Holliday junction branch migration complex subunit RuvA (214 aa).

The interval M1–S63 is domain I. A domain II region spans residues S64–P142. The tract at residues A143–Q153 is flexible linker. Residues Q153–G214 are domain III.

This sequence belongs to the RuvA family. As to quaternary structure, homotetramer. Forms an RuvA(8)-RuvB(12)-Holliday junction (HJ) complex. HJ DNA is sandwiched between 2 RuvA tetramers; dsDNA enters through RuvA and exits via RuvB. An RuvB hexamer assembles on each DNA strand where it exits the tetramer. Each RuvB hexamer is contacted by two RuvA subunits (via domain III) on 2 adjacent RuvB subunits; this complex drives branch migration. In the full resolvosome a probable DNA-RuvA(4)-RuvB(12)-RuvC(2) complex forms which resolves the HJ.

It is found in the cytoplasm. The RuvA-RuvB-RuvC complex processes Holliday junction (HJ) DNA during genetic recombination and DNA repair, while the RuvA-RuvB complex plays an important role in the rescue of blocked DNA replication forks via replication fork reversal (RFR). RuvA specifically binds to HJ cruciform DNA, conferring on it an open structure. The RuvB hexamer acts as an ATP-dependent pump, pulling dsDNA into and through the RuvAB complex. HJ branch migration allows RuvC to scan DNA until it finds its consensus sequence, where it cleaves and resolves the cruciform DNA. This Arthrobacter sp. (strain FB24) protein is Holliday junction branch migration complex subunit RuvA.